Here is a 224-residue protein sequence, read N- to C-terminus: Urease accessory protein UreF (224 aa).

It belongs to the UreF family. UreD, UreF and UreG form a complex that acts as a GTP-hydrolysis-dependent molecular chaperone, activating the urease apoprotein by helping to assemble the nickel containing metallocenter of UreC. The UreE protein probably delivers the nickel.

Its subcellular location is the cytoplasm. Functionally, required for maturation of urease via the functional incorporation of the urease nickel metallocenter. In Ectopseudomonas mendocina (strain ymp) (Pseudomonas mendocina), this protein is Urease accessory protein UreF.